The primary structure comprises 338 residues: Phosphatidylinositol:ceramide inositolphosphotransferase (338 aa).

At 1–36 the chain is on the cytoplasmic side; the sequence is MTSHVTAHDVGGNEDIGTDHVPWYKQPLPLCTQVMR. A helical membrane pass occupies residues 37–57; sequence FILLLLLTVMFLGVAILVANA. The Extracellular portion of the chain corresponds to 58 to 87; it reads RMPDPEKVRPLPDLLLESIPKVALLENGTN. The helical transmembrane segment at 88 to 108 threads the bilayer; the sequence is VIIFLLNATTVVVGFKVFLLE. At 109–116 the chain is on the cytoplasmic side; sequence RHMNGLPR. A helical membrane pass occupies residues 117–137; the sequence is VTFLVGVPKIGSFLNRMAFGV. The Extracellular portion of the chain corresponds to 138–152; it reads LDSGRRPFPLKNVFP. A helical transmembrane segment spans residues 153 to 173; it reads IMAIRFLTSYAVVMVFRAFVI. Topologically, residues 174–189 are cytoplasmic; that stretch reads MGTSYPATDNHCQNPQ. A helical membrane pass occupies residues 190–210; the sequence is VIEHPVLNVILTLVTLGSGAI. Topologically, residues 211–222 are extracellular; the sequence is HCGDLMFSGHTM. Residue histidine 220 is part of the active site. The helical transmembrane segment at 223-243 threads the bilayer; that stretch reads ILSLAFILAWDYSPFLHPWAV. Residues 244-338 are Cytoplasmic-facing; sequence RVWVSVLLPI…TDASAALPEH (95 aa). Residues histidine 264 and aspartate 268 contribute to the active site.

The protein belongs to the sphingomyelin synthase family.

Its subcellular location is the membrane. Its function is as follows. Bidirectional lipid inositolphosphotransferase capable of converting phosphatidylinositol (PI) and ceramide to inositol-phosphorylceramide (IPC) and diacylglycerol (DAG) and vice versa. Direction is dependent on the relative concentrations of DAG and ceramide as phosphoinositol acceptors. Essential for viability of the pathogenic bloodstream stage of this human protozoan parasite and, consequently, can be considered as potential drug target. In Leishmania major, this protein is Phosphatidylinositol:ceramide inositolphosphotransferase.